Here is a 713-residue protein sequence, read N- to C-terminus: Polyphosphate kinase (713 aa).

Residue Asn-63 coordinates ATP. Mg(2+) contacts are provided by Arg-394 and Arg-424. His-454 serves as the catalytic Phosphohistidine intermediate. ATP is bound by residues Tyr-487, Arg-583, and His-611.

The protein belongs to the polyphosphate kinase 1 (PPK1) family. Mg(2+) is required as a cofactor. In terms of processing, an intermediate of this reaction is the autophosphorylated ppk in which a phosphate is covalently linked to a histidine residue through a N-P bond.

The catalysed reaction is [phosphate](n) + ATP = [phosphate](n+1) + ADP. Functionally, catalyzes the reversible transfer of the terminal phosphate of ATP to form a long-chain polyphosphate (polyP). The chain is Polyphosphate kinase from Prosthecochloris aestuarii (strain DSM 271 / SK 413).